The chain runs to 386 residues: Heavy metal-associated isoprenylated plant protein 5 (386 aa).

The segment covering 1–16 has biased composition (basic and acidic residues); that stretch reads MGEVQEGPKVEQEKKP. Residues 1 to 40 are disordered; it reads MGEVQEGPKVEQEKKPAATVVPVETTDGKPKSGGGDSAAA. In terms of domain architecture, HMA 1 spans 49–112; it reads VSAFVYKVDM…KLEEKTKRKV (64 aa). Residues Cys60 and Cys63 each contribute to the a metal cation site. The disordered stretch occupies residues 129-153; sequence VGEKKADGGDKEAAPPAPAPAAPKE. Over residues 130–141 the composition is skewed to basic and acidic residues; that stretch reads GEKKADGGDKEA. The region spanning 153 to 220 is the HMA 2 domain; the sequence is ESVVPLKIRL…KLKRTVEPLV (68 aa). 2 residues coordinate a metal cation: Cys164 and Cys167. Composition is skewed to basic and acidic residues over residues 223 to 245 and 252 to 297; these read KKDD…KKEA and EAKK…KKDG. The disordered stretch occupies residues 223 to 301; the sequence is KKDDGAAENK…EKKKDGGGVP (79 aa). Cys383 bears the Cysteine methyl ester mark. A lipid anchor (S-farnesyl cysteine) is attached at Cys383. Residues 384–386 constitute a propeptide, removed in mature form; it reads SVM.

Belongs to the HIPP family. Efficiently farnesylated in vitro.

Heavy-metal-binding protein. Involved in disease resistance. The chain is Heavy metal-associated isoprenylated plant protein 5 from Arabidopsis thaliana (Mouse-ear cress).